The following is a 329-amino-acid chain: Acetyl-coenzyme A carboxylase carboxyl transferase subunit alpha (329 aa).

One can recognise a CoA carboxyltransferase C-terminal domain in the interval 40-294; sequence QLESLASRRR…RAALERHLGE (255 aa).

This sequence belongs to the AccA family. In terms of assembly, acetyl-CoA carboxylase is a heterohexamer composed of biotin carboxyl carrier protein (AccB), biotin carboxylase (AccC) and two subunits each of ACCase subunit alpha (AccA) and ACCase subunit beta (AccD).

It localises to the cytoplasm. It carries out the reaction N(6)-carboxybiotinyl-L-lysyl-[protein] + acetyl-CoA = N(6)-biotinyl-L-lysyl-[protein] + malonyl-CoA. It participates in lipid metabolism; malonyl-CoA biosynthesis; malonyl-CoA from acetyl-CoA: step 1/1. Component of the acetyl coenzyme A carboxylase (ACC) complex. First, biotin carboxylase catalyzes the carboxylation of biotin on its carrier protein (BCCP) and then the CO(2) group is transferred by the carboxyltransferase to acetyl-CoA to form malonyl-CoA. In Synechococcus sp. (strain CC9902), this protein is Acetyl-coenzyme A carboxylase carboxyl transferase subunit alpha.